Reading from the N-terminus, the 289-residue chain is MKKIKVKAYAKINLSLDVLGKREDGYHEISTIMQSIDLADILEFEKSEIVKVFCNDHRVPLGEDNLIVKVINLLKEKYQMEEGVLVKLDKRIPLAAGLAGGSADAAATIVALDKLWNLNMSKEEKKEIALKVGADVPFCLEGGTKLAKGIGEIFEDLKITSMNLLLVKPDIEISTKEIYDKWDRLNFKSHHATVPVVQAIQEGNIYKIAENIKNDLELVTSQKYGIINKIKEELLKKGALGCAMSGSGPTVYGIFDDLEKLRKAYEDLKEVYSFVFFSKTIDKGLELYE.

Lys11 is a catalytic residue. An ATP-binding site is contributed by 93–103; that stretch reads PLAAGLAGGSA. The active site involves Asp135.

This sequence belongs to the GHMP kinase family. IspE subfamily.

The enzyme catalyses 4-CDP-2-C-methyl-D-erythritol + ATP = 4-CDP-2-C-methyl-D-erythritol 2-phosphate + ADP + H(+). Its pathway is isoprenoid biosynthesis; isopentenyl diphosphate biosynthesis via DXP pathway; isopentenyl diphosphate from 1-deoxy-D-xylulose 5-phosphate: step 3/6. In terms of biological role, catalyzes the phosphorylation of the position 2 hydroxy group of 4-diphosphocytidyl-2C-methyl-D-erythritol. The polypeptide is 4-diphosphocytidyl-2-C-methyl-D-erythritol kinase (Thermoanaerobacter pseudethanolicus (strain ATCC 33223 / 39E) (Clostridium thermohydrosulfuricum)).